Consider the following 446-residue polypeptide: MKNTNLTISIIGGTDGLGKWFARYLKNKGFNVIVTGRDIEKGKNVEKELGVEFTNNNIEAAKKGDIVIVAVPINVTERVIKEVAPHVREGCLLMDITSIKEIPSKAMEEHVKEGVTVIPTHPMFGPSTPSLLRQVVILTPSEKHKNTEWFNKVYNFLKKEGAKVIVIPPEKHDRIMGIVQGLTHFAFISLGATLKELNVDIKESRKFASPIYELMISIIGRIIGQNPYLYADIQMFNPRIKEIHETFINQCKEISEIVKNKDREGFVKIMKEAAKHFGSEAKRGAYYSDKAVFALTSEIEKLNKLIGKDVAVKNINSNVVHFGVLKDIEDDYLILNKNGKEQKFNILRVEVFAGDELSKLKKKHLEKKYIDVSVLFKKDVDEEVILNLLKKMFDIEIIDVYEGEKIEEGYKSITFRIYGYNKDELKNIEKEFLKIIKNIGGKERFK.

The Prephenate/arogenate dehydrogenase domain maps to 6 to 288 (LTISIIGGTD…SEAKRGAYYS (283 aa)).

It in the N-terminal section; belongs to the prephenate/arogenate dehydrogenase family.

This Methanocaldococcus jannaschii (strain ATCC 43067 / DSM 2661 / JAL-1 / JCM 10045 / NBRC 100440) (Methanococcus jannaschii) protein is Probable arogenate/prephenate dehydrogenase.